The primary structure comprises 365 residues: 2-aminoethylphosphonate--pyruvate transaminase (365 aa).

N6-(pyridoxal phosphate)lysine is present on K194.

The protein belongs to the class-V pyridoxal-phosphate-dependent aminotransferase family. PhnW subfamily. In terms of assembly, homodimer. The cofactor is pyridoxal 5'-phosphate.

It carries out the reaction (2-aminoethyl)phosphonate + pyruvate = phosphonoacetaldehyde + L-alanine. Its function is as follows. Involved in phosphonate degradation. This chain is 2-aminoethylphosphonate--pyruvate transaminase, found in Bacillus thuringiensis subsp. konkukian (strain 97-27).